Consider the following 295-residue polypeptide: Ankyrin repeat and SOCS box protein 17 (295 aa).

The stretch at 146-176 (SGITPLLYVAQTRQSNILKILLQYGILEREK) is one ANK repeat. An SOCS box domain is found at 243–295 (DYIPPTRYKDPCELVHLCRITIRTQLLANNMLPNGIFSLLIPTRLQNFLNLES).

The protein belongs to the ankyrin SOCS box (ASB) family. As to expression, specifically expressed in testis. Localizes to spermatogenic cells in testis, with highest expression in round spermatids and condensing spermatids and lower expression in pachytene spermatocytes.

The protein operates within protein modification; protein ubiquitination. May be a substrate-recognition component of a SCF-like ECS (Elongin-Cullin-SOCS-box protein) E3 ubiquitin-protein ligase complex which mediates the ubiquitination and subsequent proteasomal degradation of target proteins. The polypeptide is Ankyrin repeat and SOCS box protein 17 (Asb17) (Mus musculus (Mouse)).